We begin with the raw amino-acid sequence, 186 residues long: Ribosome-recycling factor (186 aa).

The protein belongs to the RRF family.

It localises to the cytoplasm. Its function is as follows. Responsible for the release of ribosomes from messenger RNA at the termination of protein biosynthesis. May increase the efficiency of translation by recycling ribosomes from one round of translation to another. The sequence is that of Ribosome-recycling factor from Chlorobaculum parvum (strain DSM 263 / NCIMB 8327) (Chlorobium vibrioforme subsp. thiosulfatophilum).